The chain runs to 102 residues: Small ribosomal subunit protein uS10 (102 aa).

It belongs to the universal ribosomal protein uS10 family. As to quaternary structure, part of the 30S ribosomal subunit.

Functionally, involved in the binding of tRNA to the ribosomes. In Leuconostoc citreum (strain KM20), this protein is Small ribosomal subunit protein uS10.